The primary structure comprises 201 residues: LexA repressor (201 aa).

The H-T-H motif DNA-binding region spans Val29 to Lys49. Catalysis depends on for autocatalytic cleavage activity residues Ser125 and Lys162.

This sequence belongs to the peptidase S24 family. In terms of assembly, homodimer.

The enzyme catalyses Hydrolysis of Ala-|-Gly bond in repressor LexA.. Its function is as follows. Represses a number of genes involved in the response to DNA damage (SOS response), including recA and lexA. In the presence of single-stranded DNA, RecA interacts with LexA causing an autocatalytic cleavage which disrupts the DNA-binding part of LexA, leading to derepression of the SOS regulon and eventually DNA repair. The chain is LexA repressor from Clostridium botulinum (strain ATCC 19397 / Type A).